An 844-amino-acid polypeptide reads, in one-letter code: Neuronal PAS domain-containing protein 4B (844 aa).

The tract at residues 61–74 is basic motif; degenerate; sequence KMYRSTKGASKARR. The bHLH domain occupies 61–114; that stretch reads KMYRSTKGASKARRDQINAEIRSLKELLPISDADKARLSYLHIMSLACIYTRKS. The tract at residues 75 to 114 is helix-loop-helix motif; the sequence is DQINAEIRSLKELLPISDADKARLSYLHIMSLACIYTRKS. 2 consecutive PAS domains span residues 132-190 and 294-343; these read SLPE…PVDH and DMRI…LHNG. Polar residues predominate over residues 410–422; it reads SRQSSDPLSSPDQ. Disordered regions lie at residues 410–432, 444–479, 702–725, and 757–784; these read SRQS…SGLS, GRSS…GGGH, PLPN…SYSQ, and TEGG…EAPA. Over residues 704-716 the composition is skewed to pro residues; that stretch reads PNLPSPSPVPPSP.

Efficient DNA binding requires dimerization with another bHLH protein.

It localises to the nucleus. Its function is as follows. Transcription factor expressed in neurons of the brain that regulates the excitatory-inhibitory balance within neural circuits and is required for contextual memory in the hippocampus. Plays a key role in the structural and functional plasticity of neurons. Acts as an early-response transcription factor in both excitatory and inhibitory neurons, where it induces distinct but overlapping sets of late-response genes in these two types of neurons, allowing the synapses that form on inhibitory and excitatory neurons to be modified by neuronal activity in a manner specific to their function within a circuit, thereby facilitating appropriate circuit responses to sensory experience. In Danio rerio (Zebrafish), this protein is Neuronal PAS domain-containing protein 4B (npas4b).